Consider the following 308-residue polypeptide: MRVIFAGTPAVAVPTLAAVAASRHDLVAVLTRPDAPAGRGRGLSRSPVGAWADEHGIEVLTPARPREPEFLDRLRALAPDCVPVVAYGALVPPAALEIPRHGWVNLHFSLLPAWRGAAPVQHALLHGDELTGASVFQLEEGLDTGPVYGTVTDEVRPADTSGDLLERLAHSGAELLIAVLDAIEEGSARAEPQPNDGVSLAPKLTVADARVRWGDPAFAVDRRVRACSPAPGPWTTFRDERVKLGPVTLVAGGPELRPGELLVEKSRVLAGTASTPVQLGEIRAAGKKAMPASDWARGVRVTAGEVLA.

Ser109–Pro112 serves as a coordination point for (6S)-5,6,7,8-tetrahydrofolate.

The protein belongs to the Fmt family.

It catalyses the reaction L-methionyl-tRNA(fMet) + (6R)-10-formyltetrahydrofolate = N-formyl-L-methionyl-tRNA(fMet) + (6S)-5,6,7,8-tetrahydrofolate + H(+). Its function is as follows. Attaches a formyl group to the free amino group of methionyl-tRNA(fMet). The formyl group appears to play a dual role in the initiator identity of N-formylmethionyl-tRNA by promoting its recognition by IF2 and preventing the misappropriation of this tRNA by the elongation apparatus. The sequence is that of Methionyl-tRNA formyltransferase from Salinispora tropica (strain ATCC BAA-916 / DSM 44818 / JCM 13857 / NBRC 105044 / CNB-440).